Consider the following 125-residue polypeptide: Small ribosomal subunit protein uS12 (125 aa).

Residue Asp89 is modified to 3-methylthioaspartic acid.

Belongs to the universal ribosomal protein uS12 family. As to quaternary structure, part of the 30S ribosomal subunit. Contacts proteins S8 and S17. May interact with IF1 in the 30S initiation complex.

In terms of biological role, with S4 and S5 plays an important role in translational accuracy. Interacts with and stabilizes bases of the 16S rRNA that are involved in tRNA selection in the A site and with the mRNA backbone. Located at the interface of the 30S and 50S subunits, it traverses the body of the 30S subunit contacting proteins on the other side and probably holding the rRNA structure together. The combined cluster of proteins S8, S12 and S17 appears to hold together the shoulder and platform of the 30S subunit. The protein is Small ribosomal subunit protein uS12 of Clostridium novyi (strain NT).